The primary structure comprises 503 residues: Lactation elevated protein 1 homolog B (503 aa).

The interval 108–155 (LQNQPTSELQDKVGSRETVNICRPDENVSNEKEDQQEESSKPHPPQGY) is disordered. The segment covering 130–148 (RPDENVSNEKEDQQEESSK) has biased composition (basic and acidic residues). Position 159–166 (159–166 (GNVGTGKT)) interacts with ATP.

Belongs to the AFG1 ATPase family.

In Danio rerio (Zebrafish), this protein is Lactation elevated protein 1 homolog B (lace1b).